The primary structure comprises 418 residues: Nucleoredoxin (418 aa).

Residues 109–309 enclose the Thioredoxin domain; the sequence is KYKVTSIPSL…ESNAVQLHEG (201 aa).

This sequence belongs to the nucleoredoxin family.

Its subcellular location is the cytoplasm. The protein resides in the cytosol. The protein localises to the nucleus. It catalyses the reaction [protein]-dithiol + NAD(+) = [protein]-disulfide + NADH + H(+). The catalysed reaction is [protein]-dithiol + NADP(+) = [protein]-disulfide + NADPH + H(+). Its function is as follows. Functions as a redox-dependent negative regulator of the Wnt signaling pathway. The chain is Nucleoredoxin (nxn) from Danio rerio (Zebrafish).